The primary structure comprises 556 residues: Formate--tetrahydrofolate ligase (556 aa).

Residue 64–71 (TPAGEGKT) participates in ATP binding.

Belongs to the formate--tetrahydrofolate ligase family.

The enzyme catalyses (6S)-5,6,7,8-tetrahydrofolate + formate + ATP = (6R)-10-formyltetrahydrofolate + ADP + phosphate. Its pathway is one-carbon metabolism; tetrahydrofolate interconversion. This chain is Formate--tetrahydrofolate ligase, found in Actinobacillus pleuropneumoniae serotype 5b (strain L20).